We begin with the raw amino-acid sequence, 470 residues long: Aminoacyl transferase sphA (470 aa).

The pyridoxal 5'-phosphate site is built by S212, H244, and T272. K275 carries the post-translational modification N6-(pyridoxal phosphate)lysine.

Belongs to the class-II pyridoxal-phosphate-dependent aminotransferase family. BioF subfamily. As to quaternary structure, homodimer. The cofactor is pyridoxal 5'-phosphate.

Its pathway is secondary metabolite biosynthesis. Aminoacyl transferase; part of the gene cluster that mediates the biosynthesis of sphingofungins, bioactive molecules acting as sphingolipid inhibitors via inhibiting serine palmitoyl transferase (SPT). Within the pathway, sphA transfers 2-methyl-aminomalonate and 2-hydroxymethyl-aminomalonate onto the sphB product 3-hydroxyoctadeca-4,10-dienoyl-ACP to produce the precursors of sphingofungins E and F. The substrate specificity of sphA using 2-methyl-aminomalonate and 2-hydroxymethyl-aminomalonate instread of aminomalonate is responsible for the biosynthesis of sphingofungins E and F but not B and C like in Aspergillus fumigatus. The PKS sphB does not contain any putative thioesterase domain for releasing the nascent polyketide chain and it has been suggested that aminoacyl transferases can facilitate the polyketide chain release. This Byssochlamys spectabilis (Paecilomyces variotii) protein is Aminoacyl transferase sphA.